The primary structure comprises 247 residues: DNA polymerase sliding clamp (247 aa).

The protein belongs to the PCNA family. As to quaternary structure, homotrimer. The subunits circularize to form a toroid; DNA passes through its center. Replication factor C (RFC) is required to load the toroid on the DNA.

Sliding clamp subunit that acts as a moving platform for DNA processing. Responsible for tethering the catalytic subunit of DNA polymerase and other proteins to DNA during high-speed replication. The protein is DNA polymerase sliding clamp of Methanosphaerula palustris (strain ATCC BAA-1556 / DSM 19958 / E1-9c).